The sequence spans 1039 residues: Probable inorganic carbon transporter subunit DabA 2 (1039 aa).

Residues cysteine 462, aspartate 464, histidine 721, and cysteine 736 each coordinate Zn(2+).

This sequence belongs to the inorganic carbon transporter (TC 9.A.2) DabA family. In terms of assembly, forms a complex with DabB. Zn(2+) serves as cofactor.

Its subcellular location is the cell inner membrane. Its function is as follows. Part of an energy-coupled inorganic carbon pump. The chain is Probable inorganic carbon transporter subunit DabA 2 from Nitrobacter hamburgensis (strain DSM 10229 / NCIMB 13809 / X14).